The primary structure comprises 234 residues: MGQKVNPIGLRLGVNRTWESRWYAGAGEYAKLLHEDIKIRKMLKERLKNASVSKIVIERPHKKCRVTVHTARPGVVIGKKGSDIETLRKELSKMIDGEVHLNLVEVRKPEIDAALVAESIAQQLERRVAFRRAMKRSMQSAMRMGAKGCKIVCGGRLGGAEIARTEQYNEGSVPLHTLRADIDYGTCEAKTAMGIIGIKVWIYKGEIMEHDPNAQERRLQESGEQRARSGRQAA.

The 69-residue stretch at 39-107 folds into the KH type-2 domain; it reads IRKMLKERLK…EVHLNLVEVR (69 aa). Over residues 215–227 the composition is skewed to basic and acidic residues; sequence QERRLQESGEQRA. Residues 215-234 are disordered; it reads QERRLQESGEQRARSGRQAA.

This sequence belongs to the universal ribosomal protein uS3 family. In terms of assembly, part of the 30S ribosomal subunit. Forms a tight complex with proteins S10 and S14.

Functionally, binds the lower part of the 30S subunit head. Binds mRNA in the 70S ribosome, positioning it for translation. The chain is Small ribosomal subunit protein uS3 from Maricaulis maris (strain MCS10) (Caulobacter maris).